Reading from the N-terminus, the 385-residue chain is Acetate kinase (385 aa).

Asn-9 serves as a coordination point for Mg(2+). Lys-16 contributes to the ATP binding site. Position 87 (Arg-87) interacts with substrate. The active-site Proton donor/acceptor is Asp-144. Residues 202 to 206 (HLGSG) and 277 to 279 (DIR) contribute to the ATP site. Glu-373 contributes to the Mg(2+) binding site.

The protein belongs to the acetokinase family. In terms of assembly, homodimer. It depends on Mg(2+) as a cofactor. Requires Mn(2+) as cofactor.

The protein resides in the cytoplasm. It catalyses the reaction acetate + ATP = acetyl phosphate + ADP. Its pathway is metabolic intermediate biosynthesis; acetyl-CoA biosynthesis; acetyl-CoA from acetate: step 1/2. Functionally, catalyzes the formation of acetyl phosphate from acetate and ATP. Can also catalyze the reverse reaction. The sequence is that of Acetate kinase from Rickettsia akari (strain Hartford).